A 571-amino-acid polypeptide reads, in one-letter code: Optineurin (571 aa).

Disordered regions lie at residues 1–32 (MSHQ…HPNL) and 100–144 (LSHE…DQLR). Positions 38–170 (EELLQQMKEL…VSELQLKLNS (133 aa)) form a coiled coil. An interaction with Rab8 region spans residues 58–209 (MKLNNQAMKG…GPTRTVSIGT (152 aa)). A compositionally biased stretch (basic and acidic residues) spans 100–143 (LSHENEKLKEELGKLKGKSERSSEDPTDDSRLPRAEAEQEKDQL). Positions 176 to 181 (DSFVEI) match the LIR motif. Ser177 carries the phosphoserine; by TBK1 modification. Residues 186–197 (GEAEGSVKEIKH) are compositionally biased toward basic and acidic residues. 2 disordered regions span residues 186–210 (GEAE…IGTS) and 255–291 (VSDF…TVGS). Ser198 carries the post-translational modification Phosphoserine. Polar residues predominate over residues 201–210 (PTRTVSIGTS). Residues 233–502 (CLREGNQKVE…LLKENDAFED (270 aa)) are a coiled coil. 2 stretches are compositionally biased toward basic and acidic residues: residues 255 to 268 (VSDF…RSEI) and 275 to 286 (STEKENEEEKGP). At Ser336 the chain carries Phosphoserine. Residues 405–571 (TRKESEKVDR…LQIHVMDCII (167 aa)) form an interaction with HD region. The segment at 406-514 (RKESEKVDRA…RQSLMEMQSR (109 aa)) is interaction with MYO6. The UBAN motif lies at 468–473 (DFHAER). Ser520 carries the phosphoserine modification. A CCHC NOA-type zinc finger spans residues 541–571 (QRNIPIHSCPKCGEVLPDIDTLQIHVMDCII). The Zn(2+) site is built by Cys549, Cys552, His565, and Cys569.

Self-associates. Interacts with HD. Interacts with GTF3A. Interacts with MYO6. Interacts (via UBAN) with ubiquitinated TFRC. Interacts with GTP-bound Rab8 (RAB8A and/or RAB8B). Interacts with TBC1D17. Interacts with TBK1. Interacts with TRAF3. Binds to linear ubiquitin chains. Interacts with LC3 family members MAP1LC3A, MAP1LC3B, GABARAP, GABARAPL1 and GABARAPL2; OPTN phosphorylation increases the association (at least with MAP1LC3B). Interacts with RAB12; the interaction may be indirect. Interacts with TBK1; this interaction leads to the Golgi localization of TBK1 and its subsequent activation. Interacts with palmitoyltransferase ZDHHC17/HIP14; the interaction does not lead to palmitoylation of OPTN. Interacts with CYLD. Interacts with TOM1; the interaction is indirect and is mediated by MYO6, which acts as a bridge between TOM1 and OPTN. Interacts with USP12; the interaction is independent of USP12 deubiquitinase activity and may be involved in regulation of autophagic flux. In terms of processing, phosphorylated by TBK1, leading to restrict bacterial proliferation in case of infection. In terms of tissue distribution, present in aqueous humor of the eye (at protein level).

Its subcellular location is the cytoplasm. It localises to the perinuclear region. It is found in the golgi apparatus. The protein resides in the trans-Golgi network. The protein localises to the cytoplasmic vesicle. Its subcellular location is the autophagosome. It localises to the recycling endosome. Its function is as follows. Plays an important role in the maintenance of the Golgi complex, in membrane trafficking, in exocytosis, through its interaction with myosin VI and Rab8. Links myosin VI to the Golgi complex and plays an important role in Golgi ribbon formation. Negatively regulates the induction of IFNB in response to RNA virus infection. Plays a neuroprotective role in the eye and optic nerve. Probably part of the TNF-alpha signaling pathway that can shift the equilibrium toward induction of cell death. May act by regulating membrane trafficking and cellular morphogenesis via a complex that contains Rab8 and huntingtin (HD). Mediates the interaction of Rab8 with the probable GTPase-activating protein TBC1D17 during Rab8-mediated endocytic trafficking, such as that of transferrin receptor (TFRC/TfR); regulates Rab8 recruitment to tubules emanating from the endocytic recycling compartment. Autophagy receptor that interacts directly with both the cargo to become degraded and an autophagy modifier of the MAP1 LC3 family; targets ubiquitin-coated bacteria (xenophagy) and appears to function in the same pathway as SQSTM1 and CALCOCO2/NDP52. This is Optineurin (OPTN) from Macaca mulatta (Rhesus macaque).